Here is a 138-residue protein sequence, read N- to C-terminus: Nucleoside diphosphate kinase (138 aa).

The ATP site is built by K9, F57, R85, T91, R102, and N112. H115 acts as the Pros-phosphohistidine intermediate in catalysis.

It belongs to the NDK family. In terms of assembly, homotetramer. Mg(2+) serves as cofactor.

The protein resides in the cytoplasm. It carries out the reaction a 2'-deoxyribonucleoside 5'-diphosphate + ATP = a 2'-deoxyribonucleoside 5'-triphosphate + ADP. It catalyses the reaction a ribonucleoside 5'-diphosphate + ATP = a ribonucleoside 5'-triphosphate + ADP. In terms of biological role, major role in the synthesis of nucleoside triphosphates other than ATP. The ATP gamma phosphate is transferred to the NDP beta phosphate via a ping-pong mechanism, using a phosphorylated active-site intermediate. The protein is Nucleoside diphosphate kinase of Deinococcus deserti (strain DSM 17065 / CIP 109153 / LMG 22923 / VCD115).